Reading from the N-terminus, the 280-residue chain is Elongation factor 1-delta (280 aa).

N-acetylalanine is present on A2. Residue K17 is modified to N6-acetyllysine. A phosphoserine mark is found at S37, S44, S60, S86, and S106. Position 107 is an N6-acetyllysine (K107). Residues 113–171 form a disordered region; that stretch reads SALEKSSPAHRATTPQTQHVSPMRQVEPPSRKAATATEDDEDDDIDLFGSDEEEDKEAT. N6-acetyllysine; alternate is present on K117. Position 117 is an N6-succinyllysine; alternate (K117). S119 carries the phosphoserine modification. T129 carries the post-translational modification Phosphothreonine. At S133 the chain carries Phosphoserine. At T147 the chain carries Phosphothreonine. Positions 149 to 168 are enriched in acidic residues; sequence TEDDEDDDIDLFGSDEEEDK. S162 bears the Phosphoserine; by CK2 mark.

This sequence belongs to the EF-1-beta/EF-1-delta family. As to quaternary structure, EF-1 is composed of 4 subunits: alpha, beta, delta, and gamma.

Its function is as follows. EF-1-beta and EF-1-delta stimulate the exchange of GDP bound to EF-1-alpha to GTP. The protein is Elongation factor 1-delta (EEF1D) of Bos taurus (Bovine).